The following is a 242-amino-acid chain: 1-(5-phosphoribosyl)-5-[(5-phosphoribosylamino)methylideneamino] imidazole-4-carboxamide isomerase (242 aa).

The Proton acceptor role is filled by aspartate 8. Aspartate 129 serves as the catalytic Proton donor.

Belongs to the HisA/HisF family.

The protein resides in the cytoplasm. The catalysed reaction is 1-(5-phospho-beta-D-ribosyl)-5-[(5-phospho-beta-D-ribosylamino)methylideneamino]imidazole-4-carboxamide = 5-[(5-phospho-1-deoxy-D-ribulos-1-ylimino)methylamino]-1-(5-phospho-beta-D-ribosyl)imidazole-4-carboxamide. The protein operates within amino-acid biosynthesis; L-histidine biosynthesis; L-histidine from 5-phospho-alpha-D-ribose 1-diphosphate: step 4/9. This is 1-(5-phosphoribosyl)-5-[(5-phosphoribosylamino)methylideneamino] imidazole-4-carboxamide isomerase from Maridesulfovibrio salexigens (strain ATCC 14822 / DSM 2638 / NCIMB 8403 / VKM B-1763) (Desulfovibrio salexigens).